A 149-amino-acid polypeptide reads, in one-letter code: Putative pre-16S rRNA nuclease (149 aa).

Belongs to the YqgF nuclease family.

The protein localises to the cytoplasm. Its function is as follows. Could be a nuclease involved in processing of the 5'-end of pre-16S rRNA. In Synechococcus elongatus (strain ATCC 33912 / PCC 7942 / FACHB-805) (Anacystis nidulans R2), this protein is Putative pre-16S rRNA nuclease.